The primary structure comprises 304 residues: Cyclin-dependent kinase 3 (304 aa).

The Protein kinase domain maps to 4-286 (FQKVEKIGEG…AKTALAHPYF (283 aa)). ATP is bound by residues 10–18 (IGEGTYGVV) and Lys-33. Catalysis depends on Asp-127, which acts as the Proton acceptor.

This sequence belongs to the protein kinase superfamily. CMGC Ser/Thr protein kinase family. CDC2/CDKX subfamily. In terms of assembly, interacts with CABLES1 and ATF1. Binding to CCNC/cyclin-C promotes RB1 phosphorylation. Binds to CABLES2.

It carries out the reaction L-seryl-[protein] + ATP = O-phospho-L-seryl-[protein] + ADP + H(+). It catalyses the reaction L-threonyl-[protein] + ATP = O-phospho-L-threonyl-[protein] + ADP + H(+). Functionally, serine/threonine-protein kinase that plays a critical role in the control of the eukaryotic cell cycle; involved in G0-G1 and G1-S cell cycle transitions. Interacts with CCNC/cyclin-C during interphase. Phosphorylates histone H1, ATF1, RB1 and CABLES1. ATF1 phosphorylation triggers ATF1 transactivation and transcriptional activities, and promotes cell proliferation and transformation. CDK3/cyclin-C mediated RB1 phosphorylation is required for G0-G1 transition. Promotes G1-S transition probably by contributing to the activation of E2F1, E2F2 and E2F3 in a RB1-independent manner. This chain is Cyclin-dependent kinase 3 (Cdk3), found in Mus musculus (Mouse).